The sequence spans 104 residues: Gastrin (104 aa).

The signal sequence occupies residues 1–21 (MQRLCVYVLILALALATFSEA). Residues 22-58 (SWKPRSRLQDAPSGPGANRGLEPHGLDQLGPASHHRR) constitute a propeptide that is removed on maturation. The tract at residues 22–70 (SWKPRSRLQDAPSGPGANRGLEPHGLDQLGPASHHRRQLGLQGPPQLVA) is disordered. A pyrrolidone carboxylic acid mark is found at glutamine 59 and glutamine 76. At tyrosine 87 the chain carries Sulfotyrosine. Residue phenylalanine 92 is modified to Phenylalanine amide. Serine 96 carries the phosphoserine modification. A propeptide spanning residues 96–104 (SAEEGDQRP) is cleaved from the precursor.

It belongs to the gastrin/cholecystokinin family.

It localises to the secreted. Gastrin stimulates the stomach mucosa to produce and secrete hydrochloric acid and the pancreas to secrete its digestive enzymes. It also stimulates smooth muscle contraction and increases blood circulation and water secretion in the stomach and intestine. In Canis lupus familiaris (Dog), this protein is Gastrin (GAST).